Consider the following 404-residue polypeptide: Glycerol-1-phosphate dehydrogenase [NAD(P)+] (404 aa).

NAD(+) is bound by residues D55, 117–121, and 139–142; these read GTVHD and TAPS. Residue D144 participates in substrate binding. S148 lines the NAD(+) pocket. Residue D191 coordinates substrate. Ni(2+) is bound by residues D191 and H271. A substrate-binding site is contributed by H275. Residue H291 coordinates Ni(2+).

This sequence belongs to the glycerol-1-phosphate dehydrogenase family. As to quaternary structure, homodimer. Ni(2+) serves as cofactor.

It localises to the cytoplasm. It carries out the reaction sn-glycerol 1-phosphate + NAD(+) = dihydroxyacetone phosphate + NADH + H(+). The enzyme catalyses sn-glycerol 1-phosphate + NADP(+) = dihydroxyacetone phosphate + NADPH + H(+). In terms of biological role, catalyzes the NAD(P)H-dependent reduction of dihydroxyacetonephosphate (DHAP or glycerone phosphate) to glycerol 1-phosphate (G1P). The G1P thus generated is probably used for the synthesis of phosphoglycerolipids in Gram-positive bacterial species. This Geobacillus thermodenitrificans (strain NG80-2) protein is Glycerol-1-phosphate dehydrogenase [NAD(P)+].